We begin with the raw amino-acid sequence, 265 residues long: Methylthioribulose-1-phosphate dehydratase (265 aa).

Substrate is bound at residue Cys116. His134 and His136 together coordinate Zn(2+). Residue Glu159 is the Proton donor/acceptor of the active site. Residue His224 participates in Zn(2+) binding.

It belongs to the aldolase class II family. MtnB subfamily. It depends on Zn(2+) as a cofactor.

The protein resides in the cytoplasm. It catalyses the reaction 5-(methylsulfanyl)-D-ribulose 1-phosphate = 5-methylsulfanyl-2,3-dioxopentyl phosphate + H2O. The protein operates within amino-acid biosynthesis; L-methionine biosynthesis via salvage pathway; L-methionine from S-methyl-5-thio-alpha-D-ribose 1-phosphate: step 2/6. In terms of biological role, catalyzes the dehydration of methylthioribulose-1-phosphate (MTRu-1-P) into 2,3-diketo-5-methylthiopentyl-1-phosphate (DK-MTP-1-P). This chain is Methylthioribulose-1-phosphate dehydratase, found in Debaryomyces hansenii (strain ATCC 36239 / CBS 767 / BCRC 21394 / JCM 1990 / NBRC 0083 / IGC 2968) (Yeast).